The primary structure comprises 454 residues: Tubulin gamma chain (454 aa).

Residue 142–148 (AGGTGSG) coordinates GTP.

The protein belongs to the tubulin family.

The protein resides in the cytoplasm. It localises to the cytoskeleton. Its subcellular location is the microtubule organizing center. The protein localises to the spindle pole body. Functionally, tubulin is the major constituent of microtubules. The gamma chain is found at microtubule organizing centers (MTOC) such as the spindle pole or the centrosome, suggesting that it is involved in the minus-end nucleation of microtubule assembly. Interacts physically with beta-tubulin and is involved in microtubule function. This Emericella nidulans (strain FGSC A4 / ATCC 38163 / CBS 112.46 / NRRL 194 / M139) (Aspergillus nidulans) protein is Tubulin gamma chain (mipA).